Here is a 225-residue protein sequence, read N- to C-terminus: MVMAEGTAVLRRNRPGTKAQDFYNWPDESFDEMDSTLAVQQYIQQNIRADCSNIDKILEPPEGQDEGVWKYEHLRQFCLELNGLAVKLQSECHPDTCTQMTATEQWIFLCAAHKTPKECPAIDYTRHTLDGAACLLNSNKYFPSRVSIKESSVAKLGSVCRRIYRIFSHAYFHHRQIFDEYENETFLCHRFTKFVMKYNLMSKDNLIVPILEEEVQNSVSGESEA.

Cysteine 92, cysteine 97, cysteine 110, histidine 113, cysteine 119, histidine 127, histidine 169, and histidine 174 together coordinate Zn(2+).

The protein belongs to the MOB1/phocein family. Binds STRN4. Interacts with DNM1 and EPS15. Interacts with nucleoside diphosphate kinase. Interacts with CTTNBP2. Interacts with CTTNBP2NL. Part of the core of STRIPAK complexes composed of PP2A catalytic and scaffolding subunits, the striatins (PP2A regulatory subunits), the striatin-associated proteins MOB4, STRIP1 and STRIP2, PDCD10 and members of the STE20 kinases, such as STK24 and STK26. Phosphorylated on serine residues. In terms of tissue distribution, highly expressed in adrenal gland, spinal cord, brain and cerebellum. Detected at lower levels in heart and skeletal muscle, and at very low levels in spleen, liver and intestine.

It localises to the cytoplasm. The protein resides in the membrane. It is found in the golgi apparatus. The protein localises to the golgi stack membrane. Its function is as follows. Part of the striatin-interacting phosphatase and kinase (STRIPAK) complexes. STRIPAK complexes have critical roles in protein (de)phosphorylation and are regulators of multiple signaling pathways including Hippo, MAPK, nuclear receptor and cytoskeleton remodeling. Different types of STRIPAK complexes are involved in a variety of biological processes such as cell growth, differentiation, apoptosis, metabolism and immune regulation. The chain is MOB-like protein phocein (Mob4) from Rattus norvegicus (Rat).